The sequence spans 403 residues: Phosphopentomutase (403 aa).

Mn(2+)-binding residues include Asp-13, Asp-298, His-303, Asp-339, His-340, and His-351.

The protein belongs to the phosphopentomutase family. Requires Mn(2+) as cofactor.

Its subcellular location is the cytoplasm. The enzyme catalyses 2-deoxy-alpha-D-ribose 1-phosphate = 2-deoxy-D-ribose 5-phosphate. It catalyses the reaction alpha-D-ribose 1-phosphate = D-ribose 5-phosphate. Its pathway is carbohydrate degradation; 2-deoxy-D-ribose 1-phosphate degradation; D-glyceraldehyde 3-phosphate and acetaldehyde from 2-deoxy-alpha-D-ribose 1-phosphate: step 1/2. Isomerase that catalyzes the conversion of deoxy-ribose 1-phosphate (dRib-1-P) and ribose 1-phosphate (Rib-1-P) to deoxy-ribose 5-phosphate (dRib-5-P) and ribose 5-phosphate (Rib-5-P), respectively. This is Phosphopentomutase from Streptococcus pyogenes serotype M3 (strain ATCC BAA-595 / MGAS315).